Here is a 236-residue protein sequence, read N- to C-terminus: LexA repressor (236 aa).

The segment at residues 26–46 is a DNA-binding region (H-T-H motif); it reads FDEMKDALDLRSKSGIHRLIT. Positions 85–109 are disordered; it reads PSVIEGNLGKVRPPSPTPAEDDHDR. Active-site for autocatalytic cleavage activity residues include Ser-157 and Lys-195.

This sequence belongs to the peptidase S24 family. Homodimer.

It carries out the reaction Hydrolysis of Ala-|-Gly bond in repressor LexA.. In terms of biological role, represses a number of genes involved in the response to DNA damage (SOS response), including recA and lexA. In the presence of single-stranded DNA, RecA interacts with LexA causing an autocatalytic cleavage which disrupts the DNA-binding part of LexA, leading to derepression of the SOS regulon and eventually DNA repair. The chain is LexA repressor from Rhodopseudomonas palustris (strain ATCC BAA-98 / CGA009).